The following is a 304-amino-acid chain: 2-phospho-L-lactate transferase (304 aa).

Aspartate 49 lines the 7,8-didemethyl-8-hydroxy-5-deazariboflavin pocket.

It belongs to the CofD family. As to quaternary structure, homodimer. Requires Mg(2+) as cofactor.

It catalyses the reaction (2S)-lactyl-2-diphospho-5'-guanosine + 7,8-didemethyl-8-hydroxy-5-deazariboflavin = oxidized coenzyme F420-0 + GMP + H(+). The protein operates within cofactor biosynthesis; coenzyme F420 biosynthesis. Functionally, catalyzes the transfer of the 2-phospholactate moiety from (2S)-lactyl-2-diphospho-5'-guanosine to 7,8-didemethyl-8-hydroxy-5-deazariboflavin (FO) with the formation of oxidized coenzyme F420-0 and GMP. This is 2-phospho-L-lactate transferase from Methanocorpusculum labreanum (strain ATCC 43576 / DSM 4855 / Z).